Reading from the N-terminus, the 683-residue chain is uncharacterized protein (683 aa).

Coiled-coil stretches lie at residues 62 to 124 (PEHY…RKER), 155 to 259 (TTTN…KLSQ), and 346 to 376 (KKSLLTVKDSVQSLKTQLDELKRTLENDGDV). Positions 213–237 (QDQVESQTGPKKRRKSPIENQPTAG) are disordered.

This is an uncharacterized protein from Invertebrate iridescent virus 3 (IIV-3).